The following is a 163-amino-acid chain: Crossover junction endodeoxyribonuclease RuvC (163 aa).

Active-site residues include Asp8, Glu68, and Asp140. Mg(2+) is bound by residues Asp8, Glu68, and Asp140.

Belongs to the RuvC family. In terms of assembly, homodimer which binds Holliday junction (HJ) DNA. The HJ becomes 2-fold symmetrical on binding to RuvC with unstacked arms; it has a different conformation from HJ DNA in complex with RuvA. In the full resolvosome a probable DNA-RuvA(4)-RuvB(12)-RuvC(2) complex forms which resolves the HJ. The cofactor is Mg(2+).

Its subcellular location is the cytoplasm. The enzyme catalyses Endonucleolytic cleavage at a junction such as a reciprocal single-stranded crossover between two homologous DNA duplexes (Holliday junction).. The RuvA-RuvB-RuvC complex processes Holliday junction (HJ) DNA during genetic recombination and DNA repair. Endonuclease that resolves HJ intermediates. Cleaves cruciform DNA by making single-stranded nicks across the HJ at symmetrical positions within the homologous arms, yielding a 5'-phosphate and a 3'-hydroxyl group; requires a central core of homology in the junction. The consensus cleavage sequence is 5'-(A/T)TT(C/G)-3'. Cleavage occurs on the 3'-side of the TT dinucleotide at the point of strand exchange. HJ branch migration catalyzed by RuvA-RuvB allows RuvC to scan DNA until it finds its consensus sequence, where it cleaves and resolves the cruciform DNA. The polypeptide is Crossover junction endodeoxyribonuclease RuvC (Erythrobacter litoralis (strain HTCC2594)).